Here is a 226-residue protein sequence, read N- to C-terminus: 7-cyano-7-deazaguanine synthase (226 aa).

10 to 20 (LSGGLDSATAA) serves as a coordination point for ATP. Zn(2+) is bound by residues C191, C199, C202, and C205.

This sequence belongs to the QueC family. Zn(2+) serves as cofactor.

It catalyses the reaction 7-carboxy-7-deazaguanine + NH4(+) + ATP = 7-cyano-7-deazaguanine + ADP + phosphate + H2O + H(+). The protein operates within purine metabolism; 7-cyano-7-deazaguanine biosynthesis. Functionally, catalyzes the ATP-dependent conversion of 7-carboxy-7-deazaguanine (CDG) to 7-cyano-7-deazaguanine (preQ(0)). In Parasynechococcus marenigrum (strain WH8102), this protein is 7-cyano-7-deazaguanine synthase.